The primary structure comprises 423 residues: Serine--tRNA ligase 1 (423 aa).

231 to 233 (TAE) is a binding site for L-serine. Position 262–264 (262–264 (RSE)) interacts with ATP. Glu285 contacts L-serine. Position 349–352 (349–352 (EISS)) interacts with ATP. Ser384 contributes to the L-serine binding site.

It belongs to the class-II aminoacyl-tRNA synthetase family. Type-1 seryl-tRNA synthetase subfamily. Homodimer. The tRNA molecule binds across the dimer.

The protein resides in the cytoplasm. It carries out the reaction tRNA(Ser) + L-serine + ATP = L-seryl-tRNA(Ser) + AMP + diphosphate + H(+). It catalyses the reaction tRNA(Sec) + L-serine + ATP = L-seryl-tRNA(Sec) + AMP + diphosphate + H(+). It participates in aminoacyl-tRNA biosynthesis; selenocysteinyl-tRNA(Sec) biosynthesis; L-seryl-tRNA(Sec) from L-serine and tRNA(Sec): step 1/1. Functionally, catalyzes the attachment of serine to tRNA(Ser). Is also able to aminoacylate tRNA(Sec) with serine, to form the misacylated tRNA L-seryl-tRNA(Sec), which will be further converted into selenocysteinyl-tRNA(Sec). This chain is Serine--tRNA ligase 1, found in Enterococcus faecalis (strain ATCC 700802 / V583).